The chain runs to 51 residues: Light-harvesting protein B800/850/890 beta-2 chain (51 aa).

The Cytoplasmic segment spans residues 1-17 (ADEMRNVSDEEAKEFHA). A bacteriochlorophyll contacts are provided by histidine 16 and histidine 34. Residues 18-40 (MFSQAFTVYVGVAVVAHILAWAW) form a helical membrane-spanning segment. At 41-51 (RPWIPGDEGFG) the chain is on the periplasmic side.

The protein belongs to the antenna complex beta subunit family. In terms of assembly, the core complex is formed by different alpha and beta chains, binding bacteriochlorophyll molecules, and arranged most probably in tetrameric structures disposed around the reaction center. The non-pigmented gamma chains may constitute additional components.

The protein localises to the cell inner membrane. Functionally, antenna complexes are light-harvesting systems, which transfer the excitation energy to the reaction centers. The protein is Light-harvesting protein B800/850/890 beta-2 chain of Halorhodospira halophila (strain DSM 244 / SL1) (Ectothiorhodospira halophila (strain DSM 244 / SL1)).